The primary structure comprises 501 residues: Glycogenin-2 (501 aa).

L42, T44, N45, Y48, and R110 together coordinate UDP. Residues L42, T44, N45, Y48, R110, K119, D135, A136, D137, N166, S167, D193, D196, and Q197 each contribute to the UDP-alpha-D-glucose site. UDP contacts are provided by D135, A136, and D137. D135 is a binding site for Mn(2+). Position 137 (D137) interacts with Mn(2+). Y228 is a glycosylation site (O-linked (Glc...) tyrosine). The UDP site is built by H245, G248, and K251. H245 contributes to the Mn(2+) binding site. 2 residues coordinate UDP-alpha-D-glucose: G248 and K251. Phosphoserine is present on residues S368, S399, and S459.

Homodimer, tightly complexed to glycogen synthase. The cofactor is Mn(2+). Self-glycosylated by the transfer of glucose residues from UDP-glucose to itself, forming an alpha-1,4-glycan of around 10 residues attached to Tyr-228. In terms of tissue distribution, detected in liver (at protein level). Expressed preferentially in liver, heart, and pancreas.

Its subcellular location is the cytoplasm. It is found in the nucleus. It catalyses the reaction L-tyrosyl-[glycogenin] + UDP-alpha-D-glucose = alpha-D-glucosyl-L-tyrosyl-[glycogenin] + UDP + H(+). It carries out the reaction [1,4-alpha-D-glucosyl](n)-L-tyrosyl-[glycogenin] + UDP-alpha-D-glucose = [1,4-alpha-D-glucosyl](n+1)-L-tyrosyl-[glycogenin] + UDP + H(+). Its pathway is glycan biosynthesis; glycogen biosynthesis. Functionally, glycogenin participates in the glycogen biosynthetic process along with glycogen synthase and glycogen branching enzyme. It catalyzes the formation of a short alpha (1,4)-glucosyl chain covalently attached via a glucose 1-O-tyrosyl linkage to internal tyrosine residues and these chains act as primers for the elongation reaction catalyzed by glycogen synthase. In Homo sapiens (Human), this protein is Glycogenin-2 (GYG2).